The sequence spans 291 residues: Potassium-transporting ATPase subunit beta (291 aa).

The Cytoplasmic segment spans residues 1–36; it reads MAALQEKKTCGQRMEEFQRYCWNPDTGQMLGRTLSR. The chain crosses the membrane as a helical; Signal-anchor for type II membrane protein span at residues 37–57; the sequence is WVWISLYYVAFYVVMTGLFAL. The Extracellular portion of the chain corresponds to 58–291; the sequence is CLYVLMQTVD…KVEFKLKIEK (234 aa). N-linked (GlcNAc...) asparagine glycans are attached at residues asparagine 99, asparagine 103, asparagine 130, asparagine 146, and asparagine 161. Cysteine 131 and cysteine 152 are disulfide-bonded. Residues cysteine 162 and cysteine 178 are joined by a disulfide bond. N-linked (GlcNAc...) asparagine glycans are attached at residues asparagine 193 and asparagine 222. Residues 194-291 are immunoglobulin-like; it reads GSAPRVDCAF…KVEFKLKIEK (98 aa). Residues cysteine 201 and cysteine 263 are joined by a disulfide bond.

This sequence belongs to the X(+)/potassium ATPases subunit beta family. As to quaternary structure, the ATPase pump is composed of two subunits: alpha (catalytic) and beta (regulatory). Interacts with alpha subunit ATP12A; this interaction is required for the formation of a functionally active pump and targeting at the plasma membrane. Interacts (via N-terminus) with alpha subunit ATP4A (via the P-domain). In terms of processing, N-glycosylation is necessary for assembly and functional expression of the pump at the plasma membrane.

Its subcellular location is the apical cell membrane. The protein resides in the cell membrane. Functionally, the beta subunit of the gastric H(+)/K(+) ATPase pump which transports H(+) ions in exchange for K(+) ions across the apical membrane of parietal cells. Plays a structural and regulatory role in the assembly and membrane targeting of a functionally active pump. Within a transport cycle, the transfer of a H(+) ion across the membrane is coupled to ATP hydrolysis and is associated with a transient phosphorylation of the alpha subunit that shifts the pump conformation from inward-facing (E1) to outward-facing state (E2). Interacts with the phosphorylation domain of the alpha subunit and functions as a ratchet, stabilizing the lumenal-open E2 conformation and preventing the reverse reaction of the transport cycle. The chain is Potassium-transporting ATPase subunit beta from Homo sapiens (Human).